The sequence spans 311 residues: Purine nucleoside phosphorylase (311 aa).

Residue serine 2 is modified to N-acetylserine. Residues serine 46, histidine 81, 101–103, and alanine 134 each bind phosphate; that span reads RLH. Glutamate 219 is a binding site for a purine D-ribonucleoside. Phosphate is bound at residue serine 238. Asparagine 261 serves as a coordination point for a purine D-ribonucleoside. Serine 275 carries the post-translational modification Phosphoserine.

The protein belongs to the PNP/MTAP phosphorylase family.

The catalysed reaction is a purine D-ribonucleoside + phosphate = a purine nucleobase + alpha-D-ribose 1-phosphate. Its pathway is purine metabolism; purine nucleoside salvage. In terms of biological role, the purine nucleoside phosphorylases catalyze the phosphorolytic breakdown of the N-glycosidic bond in the beta-(deoxy)ribonucleoside molecules, with the formation of the corresponding free purine bases and pentose-1-phosphate. Cleaves guanosine and inosine. The protein is Purine nucleoside phosphorylase (PNP1) of Saccharomyces cerevisiae (strain ATCC 204508 / S288c) (Baker's yeast).